The sequence spans 362 residues: Lipoprotein p35 (362 aa).

The first 30 residues, 1–30, serve as a signal peptide directing secretion; the sequence is MKIKKIKLLKALALTGAFGIVATVPVIVSS. Cysteine 31 carries N-palmitoyl cysteine lipidation. A lipid anchor (S-diacylglycerol cysteine) is attached at cysteine 31. A disordered region spans residues 33-53; that stretch reads STSENNGNGNGNGGTDGNTQQ.

Belongs to the p35 lipoprotein family. Post-translationally, the N-terminus is blocked.

Its subcellular location is the cell membrane. In terms of biological role, major M.penetrans antigen. The protein is Lipoprotein p35 of Malacoplasma penetrans (Mycoplasma penetrans).